A 252-amino-acid chain; its full sequence is Type III pantothenate kinase (252 aa).

6-13 (DVGNTHTT) provides a ligand contact to ATP. Substrate is bound at residue 104 to 107 (GADR). The active-site Proton acceptor is the D106. Residue D126 coordinates K(+). Residue T129 participates in ATP binding. T180 provides a ligand contact to substrate.

It belongs to the type III pantothenate kinase family. In terms of assembly, homodimer. NH4(+) serves as cofactor. Requires K(+) as cofactor.

The protein localises to the cytoplasm. It catalyses the reaction (R)-pantothenate + ATP = (R)-4'-phosphopantothenate + ADP + H(+). The protein operates within cofactor biosynthesis; coenzyme A biosynthesis; CoA from (R)-pantothenate: step 1/5. Functionally, catalyzes the phosphorylation of pantothenate (Pan), the first step in CoA biosynthesis. This Fervidobacterium nodosum (strain ATCC 35602 / DSM 5306 / Rt17-B1) protein is Type III pantothenate kinase.